The chain runs to 544 residues: Methionine--tRNA ligase (544 aa).

The 'HIGH' region motif lies at 10-20 (PYANGSLHLGH). Residues cysteine 141, cysteine 144, cysteine 153, and cysteine 156 each contribute to the Zn(2+) site. Residues 329–333 (KLSTS) carry the 'KMSKS' region motif. Threonine 332 is an ATP binding site.

The protein belongs to the class-I aminoacyl-tRNA synthetase family. MetG type 1 subfamily. In terms of assembly, monomer. The cofactor is Zn(2+).

It localises to the cytoplasm. The catalysed reaction is tRNA(Met) + L-methionine + ATP = L-methionyl-tRNA(Met) + AMP + diphosphate. Is required not only for elongation of protein synthesis but also for the initiation of all mRNA translation through initiator tRNA(fMet) aminoacylation. The protein is Methionine--tRNA ligase of Bacillus cereus (strain Q1).